We begin with the raw amino-acid sequence, 95 residues long: Beta-alanine degradation protein BauB (95 aa).

In terms of domain architecture, Cupin type-2 spans 23–90 (WRFAPGAETG…NASAHEVVFV (68 aa)).

Functionally, involved in the degradation of beta-alanine. The protein is Beta-alanine degradation protein BauB (bauB) of Pseudomonas aeruginosa (strain ATCC 15692 / DSM 22644 / CIP 104116 / JCM 14847 / LMG 12228 / 1C / PRS 101 / PAO1).